An 845-amino-acid polypeptide reads, in one-letter code: MGFDIDSQKICSDLESSDRRLKTTVLDELLDKCKEATNSESADKIADVFDKLYLHLLKCYEDRFESVRSKAIQVVSAFLSSLPPTDFHLMNVVSTLAERMGKAETVEPSEEIRLLYIAQLNLMICLYEKMENVGVFRECYPLVVKILIKSIKDDYPVVQREGCSAVVTLSRLADTQEFRPFTESILLPLYTMLNHKHAQARISAIQAIARLSLHMDASGDAMRRLFNEVSPLLMDTMPLVRREVGQMGILMLMELLDRYSFFERILPLVLCCLKDESPEVLNHIYPQWLKCGIQYFNENEAELSQQEISDLPVENYPKDVKRPTIGCRGLVQRSLRLLQLITRETSDWKDNVRLHALKLLYQFVLHAEAAMTAKFFEIYGDLAHACIDHVAEVNAEAAKVADLMGRLLSYDAWIDHGFDGLERNARESYMRCFYHMFTASLGGTYEQLMRLAKLLRCTDYSHTLKPGFQHYILKLLNTIVDKTLKINAGQNELEDLYESVYVCAIKVMALSSSLENVGDEDVNFGQTLIEKMVKLLNTSVPKIHERWFHLALQDVINLDAALEDNAEPVMLLNGLINMCHIRATYVHDLIEKVKIVFQHCCDSAQVKIFSSLSLATLFWSKTMNVERESSTQMLSEFVSQIVEPYLTWKAGSNAEAMRSLAMATLCALAQGAESESVEVLPSLAKYMPSLLEDRNVTTRHYAIKAVVYFREMSVEDLKPLAYATMQRMDDPSAGIRILAALAMGKLKPKFAETDTEENYEKEVWDAIVKRAMDLLLLYHESPEKDMRAAVAVTLKVLAKSHPEAWEERYQRALPMAQKKDLLTELYDKLTINEDSHTEVTSASQD.

8 HEAT repeats span residues 47–84, 138–175, 180–217, 260–297, 332–369, 523–561, 674–715, and 766–803; these read DVFDKLYLHLLKCYEDRFESVRSKAIQVVSAFLSSLPP, ECYPLVVKILIKSIKDDYPVVQREGCSAVVTLSRLADT, PFTESILLPLYTMLNHKHAQARISAIQAIARLSLHMDA, SFFERILPLVLCCLKDESPEVLNHIYPQWLKCGIQYFN, QRSLRLLQLITRETSDWKDNVRLHALKLLYQFVLHAEA, NFGQTLIEKMVKLLNTSVPKIHERWFHLALQDVINLDAA, SESV…MSVE, and AIVKRAMDLLLLYHESPEKDMRAAVAVTLKVLAKSHPE.

Belongs to the DNAAF5 family. As to expression, expressed in testis.

It localises to the cytoplasm. Its subcellular location is the dynein axonemal particle. In terms of biological role, cytoplasmic protein involved in the delivery of the dynein machinery to the motile cilium. It is required for the assembly of the axonemal dynein inner and outer arms, two structures attached to the peripheral outer doublet A microtubule of the axoneme, that play a crucial role in cilium motility. The protein is Dynein axonemal assembly factor 5 of Drosophila melanogaster (Fruit fly).